The sequence spans 360 residues: Phospho-N-acetylmuramoyl-pentapeptide-transferase (360 aa).

A run of 10 helical transmembrane segments spans residues 26-46, 72-92, 94-114, 132-152, 168-188, 199-219, 236-256, 263-283, 288-308, and 338-358; these read AIVS…RMIA, PTMG…LWAY, SNPY…IGFV, WKYF…YLAG, VMPQ…VGTG, GLAI…AWAT, AGEL…FLWF, VFMG…IAVL, FLLV…ILQV, and VIVR…ATLK.

The protein belongs to the glycosyltransferase 4 family. MraY subfamily. Requires Mg(2+) as cofactor.

It is found in the cell inner membrane. The enzyme catalyses UDP-N-acetyl-alpha-D-muramoyl-L-alanyl-gamma-D-glutamyl-meso-2,6-diaminopimeloyl-D-alanyl-D-alanine + di-trans,octa-cis-undecaprenyl phosphate = di-trans,octa-cis-undecaprenyl diphospho-N-acetyl-alpha-D-muramoyl-L-alanyl-D-glutamyl-meso-2,6-diaminopimeloyl-D-alanyl-D-alanine + UMP. Its pathway is cell wall biogenesis; peptidoglycan biosynthesis. In terms of biological role, catalyzes the initial step of the lipid cycle reactions in the biosynthesis of the cell wall peptidoglycan: transfers peptidoglycan precursor phospho-MurNAc-pentapeptide from UDP-MurNAc-pentapeptide onto the lipid carrier undecaprenyl phosphate, yielding undecaprenyl-pyrophosphoryl-MurNAc-pentapeptide, known as lipid I. This chain is Phospho-N-acetylmuramoyl-pentapeptide-transferase, found in Klebsiella pneumoniae (strain 342).